Consider the following 216-residue polypeptide: 3-isopropylmalate dehydratase small subunit (216 aa).

It belongs to the LeuD family. LeuD type 1 subfamily. Heterodimer of LeuC and LeuD.

The catalysed reaction is (2R,3S)-3-isopropylmalate = (2S)-2-isopropylmalate. The protein operates within amino-acid biosynthesis; L-leucine biosynthesis; L-leucine from 3-methyl-2-oxobutanoate: step 2/4. In terms of biological role, catalyzes the isomerization between 2-isopropylmalate and 3-isopropylmalate, via the formation of 2-isopropylmaleate. This chain is 3-isopropylmalate dehydratase small subunit, found in Cupriavidus pinatubonensis (strain JMP 134 / LMG 1197) (Cupriavidus necator (strain JMP 134)).